Here is a 474-residue protein sequence, read N- to C-terminus: Glutathione synthetase (474 aa).

Alanine 2 is modified (N-acetylalanine). Residue arginine 125 coordinates substrate. Glutamate 144 is a binding site for ATP. Positions 144 and 146 each coordinate Mg(2+). Residues valine 148–serine 151, glutamate 214–asparagine 216, glutamine 220, and arginine 267–tyrosine 270 each bind substrate. Residues lysine 305, lysine 364–asparagine 373, tyrosine 375, and methionine 398–isoleucine 401 each bind ATP. Residue glutamate 368 participates in Mg(2+) binding. Serine 415 is modified (phosphoserine). Position 425 (glutamate 425) interacts with ATP. Arginine 450 lines the substrate pocket. ATP contacts are provided by lysine 452 and aspartate 458. Valine 461 to alanine 462 is a binding site for substrate.

It belongs to the eukaryotic GSH synthase family. As to quaternary structure, homodimer. It depends on Mg(2+) as a cofactor.

The enzyme catalyses gamma-L-glutamyl-L-cysteine + glycine + ATP = glutathione + ADP + phosphate + H(+). The catalysed reaction is gamma-L-glutamyl-(2S)-2-aminobutanoate + glycine + ATP = ophthalmate + ADP + phosphate + H(+). The protein operates within sulfur metabolism; glutathione biosynthesis; glutathione from L-cysteine and L-glutamate: step 2/2. Catalyzes the production of glutathione from gamma-glutamylcysteine and glycine in an ATP-dependent manner. Glutathione (gamma-glutamylcysteinylglycine, GSH) is the most abundant intracellular thiol in living aerobic cells and is required for numerous processes including the protection of cells against oxidative damage, amino acid transport, the detoxification of foreign compounds, the maintenance of protein sulfhydryl groups in a reduced state and acts as a cofactor for a number of enzymes. Participates in ophthalmate biosynthesis in hepatocytes. The chain is Glutathione synthetase from Bos taurus (Bovine).